A 239-amino-acid chain; its full sequence is Endonuclease V (239 aa).

2 residues coordinate Mg(2+): Asp50 and Asp118.

The protein belongs to the endonuclease V family. The cofactor is Mg(2+).

The protein localises to the cytoplasm. The enzyme catalyses Endonucleolytic cleavage at apurinic or apyrimidinic sites to products with a 5'-phosphate.. Its function is as follows. DNA repair enzyme involved in the repair of deaminated bases. Selectively cleaves double-stranded DNA at the second phosphodiester bond 3' to a deoxyinosine leaving behind the intact lesion on the nicked DNA. The protein is Endonuclease V of Xylella fastidiosa (strain Temecula1 / ATCC 700964).